Consider the following 154-residue polypeptide: CASP-like protein ARALYDRAFT_485429 (154 aa).

Topologically, residues 1–12 (MENVPGSFGTSA) are cytoplasmic. The helical transmembrane segment at 13 to 33 (SFALRFGQTIFSAASLIFMCF) threads the bilayer. Over 34 to 41 (DYDFYDFT) the chain is Extracellular. A helical membrane pass occupies residues 42–62 (TFCYLATVMAIVTPWSILLAL). Topologically, residues 63 to 81 (TDTYSVLVKLLPQELRVLS) are cytoplasmic. A helical membrane pass occupies residues 82–102 (IVFAGDFVLSFLSLGGACAVA). At 103–128 (SATELLASADGKICDGNLCIQYQVSA) the chain is on the extracellular side. A helical transmembrane segment spans residues 129-149 (ALAFLCWFLLLASALFNFWSL). Over 150 to 154 (PSLYY) the chain is Cytoplasmic.

This sequence belongs to the Casparian strip membrane proteins (CASP) family. In terms of assembly, homodimer and heterodimers.

The protein resides in the cell membrane. The chain is CASP-like protein ARALYDRAFT_485429 from Arabidopsis lyrata subsp. lyrata (Lyre-leaved rock-cress).